The sequence spans 322 residues: Zinc finger C2HC domain-containing protein CBG14627 (322 aa).

2 C2HC/C3H-type zinc fingers span residues 9-38 (PVYP…LATL) and 119-148 (DYVQ…QTTR). Residues C13, C16, H28, C32, C123, C126, H138, and C142 each coordinate Zn(2+). Residues 144–322 (EQTTRKQGGK…SRNNSRSRIF (179 aa)) form a disordered region. A compositionally biased stretch (polar residues) spans 148 to 168 (RKQGGKSSAGNRGLTSNNYRS). A compositionally biased stretch (basic and acidic residues) spans 171–219 (SKHEGRKQESSSRNGSAERKTTTRGRDGSLSRARRDDSNDLTNRRKSLE). Positions 220-238 (TRSQLTTGQANNRTTSLSA) are enriched in polar residues. Residues 278–294 (TTTTASASRSGSGSSSR) show a composition bias toward low complexity. The span at 296-305 (RTRDESRESR) shows a compositional bias: basic and acidic residues. A compositionally biased stretch (low complexity) spans 311–322 (SNSRNNSRSRIF).

Belongs to the ZC2HC1 family. The cofactor is Zn(2+).

The chain is Zinc finger C2HC domain-containing protein CBG14627 from Caenorhabditis briggsae.